The chain runs to 146 residues: Large ribosomal subunit protein bL9 (146 aa).

The protein belongs to the bacterial ribosomal protein bL9 family.

Functionally, binds to the 23S rRNA. The protein is Large ribosomal subunit protein bL9 of Nautilia profundicola (strain ATCC BAA-1463 / DSM 18972 / AmH).